Consider the following 231-residue polypeptide: Probable glutathione S-transferase GSTU1 (231 aa).

Positions 5–84 constitute a GST N-terminal domain; the sequence is KELVLLDFWV…YLDDAFPGTP (80 aa). Residues serine 15, lysine 42, isoleucine 56, and 68-69 contribute to the glutathione site; that span reads ES. The GST C-terminal domain maps to 97 to 220; sequence AAYARATARF…LPSPEKVYDF (124 aa).

It belongs to the GST superfamily. Tau family.

The enzyme catalyses RX + glutathione = an S-substituted glutathione + a halide anion + H(+). Conjugation of reduced glutathione to a wide number of exogenous and endogenous hydrophobic electrophiles. The sequence is that of Probable glutathione S-transferase GSTU1 (GSTU1) from Oryza sativa subsp. indica (Rice).